Reading from the N-terminus, the 493-residue chain is Hexokinase (493 aa).

The Hexokinase domain maps to 27-481 (EELSWRINKF…SGKGAAITAA (455 aa)). Residues 91-239 (TGQEKGTYYA…AIPAKVCCVL (149 aa)) form a hexokinase small subdomain region. ATP is bound at residue 102–107 (DFGGTN). A glucose-binding region spans residues 177–203 (SVGFTFSFPCTSPSINCSILIDWTKGF). The tract at residues 240 to 470 (NDAVGTLMSC…ENLIIIPADD (231 aa)) is hexokinase large subdomain.

The protein belongs to the hexokinase family.

The catalysed reaction is a D-hexose + ATP = a D-hexose 6-phosphate + ADP + H(+). It catalyses the reaction D-mannose + ATP = D-mannose 6-phosphate + ADP + H(+). The enzyme catalyses D-fructose + ATP = D-fructose 6-phosphate + ADP + H(+). It carries out the reaction D-glucose + ATP = D-glucose 6-phosphate + ADP + H(+). It functions in the pathway carbohydrate metabolism; hexose metabolism. Its pathway is carbohydrate degradation; glycolysis; D-glyceraldehyde 3-phosphate and glycerone phosphate from D-glucose: step 1/4. Its function is as follows. Catalyzes the phosphorylation of various hexoses to hexose 6-phosphate. In Plasmodium falciparum, this protein is Hexokinase (HK).